Here is a 917-residue protein sequence, read N- to C-terminus: Methionine--tRNA ligase, cytoplasmic (917 aa).

The short motif at proline 44–asparagine 54 is the 'HIGH' region element. The short motif at lysine 367–serine 371 is the 'KMSKS' region element. Residue lysine 370 participates in ATP binding. Disordered stretches follow at residues glycine 591–lysine 623 and serine 702–alanine 749. Over residues proline 614 to lysine 623 the composition is skewed to basic and acidic residues. The span at serine 702–serine 713 shows a compositional bias: low complexity. Basic and acidic residues predominate over residues glutamate 732–lysine 741. The tRNA-binding domain maps to aspartate 756–valine 857.

It belongs to the class-I aminoacyl-tRNA synthetase family.

The protein localises to the cytoplasm. It carries out the reaction tRNA(Met) + L-methionine + ATP = L-methionyl-tRNA(Met) + AMP + diphosphate. The chain is Methionine--tRNA ligase, cytoplasmic from Caenorhabditis elegans.